Reading from the N-terminus, the 340-residue chain is Probable rRNA-processing protein EBP2 homolog (340 aa).

Residues M1 to K10 are compositionally biased toward basic residues. 2 disordered regions span residues M1–E59 and H245–R340. Composition is skewed to acidic residues over residues P23–A37 and M46–E59. A coiled-coil region spans residues Q206–H245. 2 stretches are compositionally biased toward gly residues: residues G264–G277 and P318–G333.

Belongs to the EBP2 family.

The protein resides in the nucleus. It localises to the nucleolus. Its function is as follows. Required for the processing of the 27S pre-rRNA. This chain is Probable rRNA-processing protein EBP2 homolog, found in Caenorhabditis elegans.